The following is a 329-amino-acid chain: Strigolactones hydrolase CXE15 (329 aa).

The Involved in the stabilization of the negatively charged intermediate by the formation of the oxyanion hole motif lies at H83 to G85. Residues G85, G86, S169, and S170 each contribute to the (-)-2'-epi-GR24 site. The active-site Nucleophile is S169. Catalysis depends on residues E271 and H302.

This sequence belongs to the 'GDXG' lipolytic enzyme family. As to expression, expressed in axillary buds, leaves, stems, hypocotyls, flowers, siliques, and vasculatures of shoots and roots.

The protein localises to the nucleus. It localises to the cytoplasm. It is found in the cytosol. It carries out the reaction (-)-2'-epi-GR24 + H2O = (-)-2'-epi-GR24 ABC-rings + 5-hydroxy-3-methylfuran-2(5H)-one. It catalyses the reaction 5-deoxystrigol + H2O = 5-deoxystrigol ABC-rings + 5-hydroxy-3-methylfuran-2(5H)-one. The enzyme catalyses orobanchol + H2O = orobanchol ABC-rings + 5-hydroxy-3-methylfuran-2(5H)-one. Binds to strigolactones (SLs) such as (-)-2'-epi-GR24(4DO), 5-deoxystrigol (5DS) and orobanchol, and catalyzes their hydrolysis; SL are phytohormones controlling shoot branching and communications between plants and microorganisms. Promotes shoot branching by dampening SL-inhibited axillary bud outgrowth. This is Strigolactones hydrolase CXE15 from Arabidopsis thaliana (Mouse-ear cress).